A 136-amino-acid chain; its full sequence is Large ribosomal subunit protein uL16 (136 aa).

It belongs to the universal ribosomal protein uL16 family. As to quaternary structure, part of the 50S ribosomal subunit.

Binds 23S rRNA and is also seen to make contacts with the A and possibly P site tRNAs. The sequence is that of Large ribosomal subunit protein uL16 from Shewanella baltica (strain OS155 / ATCC BAA-1091).